Consider the following 338-residue polypeptide: Large ribosomal subunit protein uL10 (338 aa).

The disordered stretch occupies residues 302–338 (IAAQPQPAEEAEEKVEEEEEEEKEEEEALAGLGALFG). The segment covering 310–329 (EEAEEKVEEEEEEEKEEEEA) has biased composition (acidic residues).

It belongs to the universal ribosomal protein uL10 family. As to quaternary structure, part of the 50S ribosomal subunit. Forms part of the ribosomal stalk which helps the ribosome interact with GTP-bound translation factors. Forms a heptameric L10(L12)2(L12)2(L12)2 complex, where L10 forms an elongated spine to which the L12 dimers bind in a sequential fashion.

In terms of biological role, forms part of the ribosomal stalk, playing a central role in the interaction of the ribosome with GTP-bound translation factors. The sequence is that of Large ribosomal subunit protein uL10 from Thermococcus sibiricus (strain DSM 12597 / MM 739).